A 261-amino-acid polypeptide reads, in one-letter code: Imidazole glycerol phosphate synthase subunit HisF (261 aa).

Residues D16 and D135 contribute to the active site.

This sequence belongs to the HisA/HisF family. In terms of assembly, heterodimer of HisH and HisF.

Its subcellular location is the cytoplasm. The catalysed reaction is 5-[(5-phospho-1-deoxy-D-ribulos-1-ylimino)methylamino]-1-(5-phospho-beta-D-ribosyl)imidazole-4-carboxamide + L-glutamine = D-erythro-1-(imidazol-4-yl)glycerol 3-phosphate + 5-amino-1-(5-phospho-beta-D-ribosyl)imidazole-4-carboxamide + L-glutamate + H(+). The protein operates within amino-acid biosynthesis; L-histidine biosynthesis; L-histidine from 5-phospho-alpha-D-ribose 1-diphosphate: step 5/9. Functionally, IGPS catalyzes the conversion of PRFAR and glutamine to IGP, AICAR and glutamate. The HisF subunit catalyzes the cyclization activity that produces IGP and AICAR from PRFAR using the ammonia provided by the HisH subunit. The polypeptide is Imidazole glycerol phosphate synthase subunit HisF (Mycolicibacterium gilvum (strain PYR-GCK) (Mycobacterium gilvum (strain PYR-GCK))).